The sequence spans 588 residues: BTB/POZ domain-containing protein At3g26490 (588 aa).

A BTB domain is found at 28 to 99 (NDLVIQVKST…CYGITITLCA (72 aa)). Residues 218-507 (RWWGEDLAEL…VQILFVEQAR (290 aa)) form the NPH3 domain. Phosphoserine occurs at positions 376 and 378. Y448 bears the Phosphotyrosine mark. Positions 529 to 554 (FTTRREEGGQEEEERDETKPSGGFLQ) are disordered.

Belongs to the NPH3 family.

It functions in the pathway protein modification; protein ubiquitination. In terms of biological role, may act as a substrate-specific adapter of an E3 ubiquitin-protein ligase complex (CUL3-RBX1-BTB) which mediates the ubiquitination and subsequent proteasomal degradation of target proteins. The chain is BTB/POZ domain-containing protein At3g26490 from Arabidopsis thaliana (Mouse-ear cress).